The primary structure comprises 96 residues: Large ribosomal subunit protein bL28 (96 aa).

The protein belongs to the bacterial ribosomal protein bL28 family.

The polypeptide is Large ribosomal subunit protein bL28 (Parvibaculum lavamentivorans (strain DS-1 / DSM 13023 / NCIMB 13966)).